The sequence spans 527 residues: Bromodomain-containing protein 9 (527 aa).

The span at 1 to 16 shows a compositional bias: basic residues; the sequence is MNVSVTKRRKKKKKKK. Positions 1-54 are disordered; the sequence is MNVSVTKRRKKKKKKKSEKEKDKYLDEDERRRRKEEKKRKREKEQCDSEGETEV. Positions 17 to 30 are enriched in basic and acidic residues; the sequence is SEKEKDKYLDEDER. Positions 31–41 are enriched in basic residues; that stretch reads RRRKEEKKRKR. In terms of domain architecture, Bromo spans 78-182; sequence NESTPLQQLL…HTGFKMMSKA (105 aa). Residues 156-158 form a histone H4K5ac H4K8ac and histone H4K5bu H4K8bu binding region; it reads TYN. Residues 468-478 are compositionally biased toward basic and acidic residues; sequence DFHDVHNDRGG. Residues 468 to 527 form a disordered region; it reads DFHDVHNDRGGSRPSSSSSMSNNSERDHHLGSPSRISVGEQQDIHDPYEFLQSPETDNQN. The segment covering 479-490 has biased composition (low complexity); sequence SRPSSSSSMSNN.

Binds acetylated histones H3 and H4. Binds butyrylated histone H4.

The protein localises to the nucleus. In terms of biological role, plays a role in chromatin remodeling and regulation of transcription. Acts as a chromatin reader that recognizes and binds acylated histones: binds histones that are acetylated and/or butyrylated. The protein is Bromodomain-containing protein 9 (brd9) of Xenopus laevis (African clawed frog).